The primary structure comprises 361 residues: Phospho-N-acetylmuramoyl-pentapeptide-transferase (361 aa).

10 consecutive transmembrane segments (helical) span residues 27–47, 70–90, 97–117, 134–154, 167–187, 199–219, 236–256, 263–283, 288–308, and 338–358; these read ILAS…MIRW, GTPT…CLLW, SLWL…VDDY, YFWQ…NASL, TVTW…IVGS, GLAI…AYAS, TGEL…FLWY, VFMG…VAIV, LVLL…ILQV, and KVIV…LATL.

It belongs to the glycosyltransferase 4 family. MraY subfamily. It depends on Mg(2+) as a cofactor.

It localises to the cell inner membrane. The enzyme catalyses UDP-N-acetyl-alpha-D-muramoyl-L-alanyl-gamma-D-glutamyl-meso-2,6-diaminopimeloyl-D-alanyl-D-alanine + di-trans,octa-cis-undecaprenyl phosphate = di-trans,octa-cis-undecaprenyl diphospho-N-acetyl-alpha-D-muramoyl-L-alanyl-D-glutamyl-meso-2,6-diaminopimeloyl-D-alanyl-D-alanine + UMP. Its pathway is cell wall biogenesis; peptidoglycan biosynthesis. In terms of biological role, catalyzes the initial step of the lipid cycle reactions in the biosynthesis of the cell wall peptidoglycan: transfers peptidoglycan precursor phospho-MurNAc-pentapeptide from UDP-MurNAc-pentapeptide onto the lipid carrier undecaprenyl phosphate, yielding undecaprenyl-pyrophosphoryl-MurNAc-pentapeptide, known as lipid I. The polypeptide is Phospho-N-acetylmuramoyl-pentapeptide-transferase (Legionella pneumophila (strain Paris)).